The following is a 193-amino-acid chain: Leucyl/phenylalanyl-tRNA--protein transferase (193 aa).

The protein belongs to the L/F-transferase family.

It is found in the cytoplasm. The enzyme catalyses N-terminal L-lysyl-[protein] + L-leucyl-tRNA(Leu) = N-terminal L-leucyl-L-lysyl-[protein] + tRNA(Leu) + H(+). It carries out the reaction N-terminal L-arginyl-[protein] + L-leucyl-tRNA(Leu) = N-terminal L-leucyl-L-arginyl-[protein] + tRNA(Leu) + H(+). It catalyses the reaction L-phenylalanyl-tRNA(Phe) + an N-terminal L-alpha-aminoacyl-[protein] = an N-terminal L-phenylalanyl-L-alpha-aminoacyl-[protein] + tRNA(Phe). Functionally, functions in the N-end rule pathway of protein degradation where it conjugates Leu, Phe and, less efficiently, Met from aminoacyl-tRNAs to the N-termini of proteins containing an N-terminal arginine or lysine. This is Leucyl/phenylalanyl-tRNA--protein transferase from Gloeobacter violaceus (strain ATCC 29082 / PCC 7421).